The sequence spans 275 residues: Large ribosomal subunit protein uL2 (275 aa).

The segment at 223–275 (VAMNPVDHPHGGGEGRTSGGRHPVSPWGQPTKGYKTRSNKRTDKYIVRRRNKK) is disordered.

Belongs to the universal ribosomal protein uL2 family. In terms of assembly, part of the 50S ribosomal subunit. Forms a bridge to the 30S subunit in the 70S ribosome.

In terms of biological role, one of the primary rRNA binding proteins. Required for association of the 30S and 50S subunits to form the 70S ribosome, for tRNA binding and peptide bond formation. It has been suggested to have peptidyltransferase activity; this is somewhat controversial. Makes several contacts with the 16S rRNA in the 70S ribosome. The polypeptide is Large ribosomal subunit protein uL2 (Shewanella halifaxensis (strain HAW-EB4)).